The chain runs to 226 residues: ATP synthase F(0) complex subunit a (226 aa).

5 helical membrane passes run 5 to 25 (LFAP…LIII), 68 to 88 (WSLM…LGML), 97 to 117 (QLSM…TTGF), 136 to 156 (FLIP…PVAW), and 189 to 209 (AFIT…VALI).

This sequence belongs to the ATPase A chain family. In terms of assembly, component of the ATP synthase complex composed at least of ATP5F1A/subunit alpha, ATP5F1B/subunit beta, ATP5MC1/subunit c (homooctomer), MT-ATP6/subunit a, MT-ATP8/subunit 8, ATP5ME/subunit e, ATP5MF/subunit f, ATP5MG/subunit g, ATP5MK/subunit k, ATP5MJ/subunit j, ATP5F1C/subunit gamma, ATP5F1D/subunit delta, ATP5F1E/subunit epsilon, ATP5PF/subunit F6, ATP5PB/subunit b, ATP5PD/subunit d, ATP5PO/subunit OSCP. ATP synthase complex consists of a soluble F(1) head domain (subunits alpha(3) and beta(3)) - the catalytic core - and a membrane F(0) domain - the membrane proton channel (subunits c, a, 8, e, f, g, k and j). These two domains are linked by a central stalk (subunits gamma, delta, and epsilon) rotating inside the F1 region and a stationary peripheral stalk (subunits F6, b, d, and OSCP). Interacts with DNAJC30; interaction is direct.

The protein localises to the mitochondrion inner membrane. It carries out the reaction H(+)(in) = H(+)(out). Subunit a, of the mitochondrial membrane ATP synthase complex (F(1)F(0) ATP synthase or Complex V) that produces ATP from ADP in the presence of a proton gradient across the membrane which is generated by electron transport complexes of the respiratory chain. ATP synthase complex consist of a soluble F(1) head domain - the catalytic core - and a membrane F(1) domain - the membrane proton channel. These two domains are linked by a central stalk rotating inside the F(1) region and a stationary peripheral stalk. During catalysis, ATP synthesis in the catalytic domain of F(1) is coupled via a rotary mechanism of the central stalk subunits to proton translocation. With the subunit c (ATP5MC1), forms the proton-conducting channel in the F(0) domain, that contains two crucial half-channels (inlet and outlet) that facilitate proton movement from the mitochondrial intermembrane space (IMS) into the matrix. Protons are taken up via the inlet half-channel and released through the outlet half-channel, following a Grotthuss mechanism. This Balaenoptera physalus (Fin whale) protein is ATP synthase F(0) complex subunit a.